The following is an 842-amino-acid chain: DNA topoisomerase-like protein cin-4 (842 aa).

Basic and acidic residues predominate over residues 1 to 26 (MSEEDRNVFTSIDKKGGGSKQMDDLN). Residues 1–50 (MSEEDRNVFTSIDKKGGGSKQMDDLNQKCPKRKTSKLKGIPKLEDANDAG) are disordered. The Topo IIA-type catalytic domain occupies 314 to 783 (IPCLVDGLKP…TWQDLWITDL (470 aa)).

The protein belongs to the type II topoisomerase family.

Plays a role in the removal of cohesin from kinetochores on mitotic chromosomes and is required for centromere resolution. This Caenorhabditis elegans protein is DNA topoisomerase-like protein cin-4.